We begin with the raw amino-acid sequence, 806 residues long: Ribonucleoside-diphosphate reductase large subunit-like protein (806 aa).

The protein belongs to the ribonucleoside diphosphate reductase large chain family.

It localises to the virion. The protein resides in the host cytoplasm. Its function is as follows. Does not possess a ribonucleotide reductase activity. Betaherpesviruses probably use another strategy to expand the dNTP pool in a quiescent host cell. The protein is Ribonucleoside-diphosphate reductase large subunit-like protein of Human herpesvirus 7 (strain JI) (HHV-7).